A 105-amino-acid polypeptide reads, in one-letter code: SAGA-associated factor 11 (105 aa).

The segment at 76–97 (FRCPNCSRDLSANRFAAHLERC) adopts an SGF11-type zinc-finger fold.

It belongs to the SGF11 family. As to quaternary structure, component of the 1.8 MDa SAGA transcription coactivator-HAT complex. SAGA is built of 5 distinct domains with specialized functions. Within the SAGA complex, SUS1, SGF11, SGF73 and UBP8 form an additional subcomplex of SAGA called the DUB module (deubiquitination module). Interacts directly with SGF73, SUS1 and UBP8.

It is found in the nucleus. Its function is as follows. Functions as a component of the transcription regulatory histone acetylation (HAT) complex SAGA. At the promoters, SAGA is required for recruitment of the basal transcription machinery. It influences RNA polymerase II transcriptional activity through different activities such as TBP interaction and promoter selectivity, interaction with transcription activators, and chromatin modification through histone acetylation and deubiquitination. SAGA acetylates nucleosomal histone H3 to some extent (to form H3K9ac, H3K14ac, H3K18ac and H3K23ac). SAGA interacts with DNA via upstream activating sequences (UASs). Involved in transcriptional regulation of a subset of SAGA-regulated genes. Within the SAGA complex, participates in a subcomplex, that specifically deubiquitinates histones H2B. In Eremothecium gossypii (strain ATCC 10895 / CBS 109.51 / FGSC 9923 / NRRL Y-1056) (Yeast), this protein is SAGA-associated factor 11.